The sequence spans 135 residues: Small ribosomal subunit protein bS6 (135 aa).

Lysine 93 carries the post-translational modification N6-acetyllysine. Residues 98–135 form a disordered region; the sequence is EASPMVKAKDERRERRDDFANETADDAEAGDSEEEEEE. Residues 104 to 116 are compositionally biased toward basic and acidic residues; sequence KAKDERRERRDDF. Residues 120–135 show a composition bias toward acidic residues; the sequence is TADDAEAGDSEEEEEE.

It belongs to the bacterial ribosomal protein bS6 family. As to quaternary structure, part of the 30S ribosomal subunit. Interacts weakly with uL2 in one of the 3.5 A resolved structures. Post-translationally, 5 different forms of the protein, varying only in the number of C-terminal glutamate residues, were isolated. The sequence shown is form bS6-6, which is the longest. The first two Glu are encoded by the rpsF gene, the other Glu are added post-translationally by the RimK enzyme.

In terms of biological role, binds together with bS18 to 16S ribosomal RNA. The sequence is that of Small ribosomal subunit protein bS6 (rpsF) from Escherichia coli (strain K12).